The following is a 90-amino-acid chain: Conotoxin Im6.2 (90 aa).

Positions 1–18 (MKLTILLLVAALLVLTQA) are cleaved as a signal peptide. Positions 19 to 29 (RTERRRVKSRK) are excised as a propeptide. 3 cysteine pairs are disulfide-bonded: C61-C75, C68-C79, and C74-C84. E89 carries the post-translational modification Glutamic acid 1-amide.

The protein belongs to the conotoxin O2 superfamily. As to expression, expressed by the venom duct.

The protein localises to the secreted. In terms of biological role, probable neurotoxin. This is Conotoxin Im6.2 from Conus imperialis (Imperial cone).